Reading from the N-terminus, the 517-residue chain is Ribosome assembly protein 4 (517 aa).

Residues 1-25 (MATLAPPPSKRQRREEIQRTQTQQD) form a disordered region. The interval 34–128 (LGSFKANFID…TITLSAEPQA (95 aa)) is ubiquitin-like (UBL) domain. 8 WD repeats span residues 144–184 (GHGQ…PKFT), 187–226 (GHTG…QVNQ), 230–277 (GHAK…HVLS), 278–316 (GHKG…LVHN), 351–397 (EERR…SKPV), 402–441 (GHQN…FIKN), 444–483 (GHVA…LAMD), and 486–517 (GHED…TWRN).

The protein belongs to the NLE1/RSA4 family. As to quaternary structure, associates with the pre-60S ribosomal particle. Interacts (via WD repeats) with uL18. Interacts (via UBL domain) with MDN1 (via VWFA/MIDAS domain). Interacts (via WD repeats) with NSA2.

The protein resides in the nucleus. Its subcellular location is the nucleolus. Its function is as follows. Involved in ribosome biogenesis. Required for processing and efficient intra-nuclear transport of pre-60S ribosomal subunits. Interacts with the AAA-ATPase Midasin, which is essential for the ATP-dependent dissociation of a group of nonribosomal factors from the pre-60S particle. This chain is Ribosome assembly protein 4, found in Chaetomium thermophilum (strain DSM 1495 / CBS 144.50 / IMI 039719) (Thermochaetoides thermophila).